The primary structure comprises 366 residues: Ferrochelatase (366 aa).

Fe cation-binding residues include His209 and Glu290.

This sequence belongs to the ferrochelatase family.

The protein localises to the cytoplasm. It catalyses the reaction heme b + 2 H(+) = protoporphyrin IX + Fe(2+). It participates in porphyrin-containing compound metabolism; protoheme biosynthesis; protoheme from protoporphyrin-IX: step 1/1. In terms of biological role, catalyzes the ferrous insertion into protoporphyrin IX. The protein is Ferrochelatase of Teredinibacter turnerae (strain ATCC 39867 / T7901).